We begin with the raw amino-acid sequence, 347 residues long: Anthranilate phosphoribosyltransferase (347 aa).

5-phospho-alpha-D-ribose 1-diphosphate contacts are provided by residues Gly88, 91–92 (GD), Thr96, 98–101 (NIST), 116–124 (KHGNRAASS), and Ser128. Gly88 contributes to the anthranilate binding site. A Mg(2+)-binding site is contributed by Ser100. An anthranilate-binding site is contributed by Asn119. Position 174 (Arg174) interacts with anthranilate. 2 residues coordinate Mg(2+): Asp233 and Glu234.

The protein belongs to the anthranilate phosphoribosyltransferase family. Homodimer. Requires Mg(2+) as cofactor.

It carries out the reaction N-(5-phospho-beta-D-ribosyl)anthranilate + diphosphate = 5-phospho-alpha-D-ribose 1-diphosphate + anthranilate. The protein operates within amino-acid biosynthesis; L-tryptophan biosynthesis; L-tryptophan from chorismate: step 2/5. Its function is as follows. Catalyzes the transfer of the phosphoribosyl group of 5-phosphorylribose-1-pyrophosphate (PRPP) to anthranilate to yield N-(5'-phosphoribosyl)-anthranilate (PRA). The protein is Anthranilate phosphoribosyltransferase of Rhodospirillum rubrum (strain ATCC 11170 / ATH 1.1.1 / DSM 467 / LMG 4362 / NCIMB 8255 / S1).